The primary structure comprises 235 residues: Sugar fermentation stimulation protein homolog (235 aa).

Belongs to the SfsA family.

The polypeptide is Sugar fermentation stimulation protein homolog (Roseobacter denitrificans (strain ATCC 33942 / OCh 114) (Erythrobacter sp. (strain OCh 114))).